The following is a 436-amino-acid chain: Phosphoribosylamine--glycine ligase (436 aa).

In terms of domain architecture, ATP-grasp spans 106 to 318 (RKLFEDYDIE…LADVCQAIVD (213 aa)). 133–196 (LDDFDRDVVV…EERLIGEEFT (64 aa)) contributes to the ATP binding site. Gln-276, Glu-288, and Asn-290 together coordinate Mg(2+). Residues Gln-276, Glu-288, and Asn-290 each coordinate Mn(2+).

This sequence belongs to the GARS family. Requires Mg(2+) as cofactor. The cofactor is Mn(2+).

It catalyses the reaction 5-phospho-beta-D-ribosylamine + glycine + ATP = N(1)-(5-phospho-beta-D-ribosyl)glycinamide + ADP + phosphate + H(+). The protein operates within purine metabolism; IMP biosynthesis via de novo pathway; N(1)-(5-phospho-D-ribosyl)glycinamide from 5-phospho-alpha-D-ribose 1-diphosphate: step 2/2. This is Phosphoribosylamine--glycine ligase from Methanobrevibacter smithii (strain ATCC 35061 / DSM 861 / OCM 144 / PS).